A 65-amino-acid chain; its full sequence is Large ribosomal subunit protein bL35 (65 aa).

Belongs to the bacterial ribosomal protein bL35 family.

The chain is Large ribosomal subunit protein bL35 from Thermus thermophilus (strain ATCC BAA-163 / DSM 7039 / HB27).